We begin with the raw amino-acid sequence, 302 residues long: Ribostamycin:4-(gamma-L-glutamylamino)-(S)-2-hydroxybutanoyl-[BtrI acyl-carrier protein] 4-(gamma-L-glutamylamino)-(S)-2-hydroxybutanoate transferase (302 aa).

It catalyses the reaction 4-(gamma-L-glutamylamino)-(2S)-2-hydroxybutanoyl-[BtrI ACP] + ribostamycin = gamma-L-glutamyl-butirosin B + holo-[BtrI ACP] + H(+). It functions in the pathway antibiotic biosynthesis; butirosin biosynthesis. Its function is as follows. Aminoglycoside acyltransferase that attaches the (S)-4-amino-2-hydroxybutyrate (AHBA) side chain from the acyl carrier protein BtrI to the aminoglycoside ribostamycin in the biosynthetic pathway of butirosin. The AHBA side chain protects the antibiotic from several common resistance mechanisms. This is Ribostamycin:4-(gamma-L-glutamylamino)-(S)-2-hydroxybutanoyl-[BtrI acyl-carrier protein] 4-(gamma-L-glutamylamino)-(S)-2-hydroxybutanoate transferase (btrH) from Niallia circulans (Bacillus circulans).